A 101-amino-acid chain; its full sequence is Small ribosomal subunit protein uS14 (101 aa).

Belongs to the universal ribosomal protein uS14 family. As to quaternary structure, part of the 30S ribosomal subunit. Contacts proteins S3 and S10.

Its function is as follows. Binds 16S rRNA, required for the assembly of 30S particles and may also be responsible for determining the conformation of the 16S rRNA at the A site. The protein is Small ribosomal subunit protein uS14 of Blochmanniella floridana.